The chain runs to 1010 residues: Importin-8 (1010 aa).

Residues 22–102 (AETELNQSYK…RDNIVEGIIR (81 aa)) enclose the Importin N-terminal domain. Residues 886-895 (NHSKAEKVDI) are compositionally biased toward basic and acidic residues. Residues 886-932 (NHSKAEKVDIEENEEISSEEEEETSVSAQAMQSQIGRSEEEDDDDWD) form a disordered region. Residues 896–909 (EENEEISSEEEEET) are compositionally biased toward acidic residues. A phosphoserine mark is found at Ser-902 and Ser-903. The segment covering 910 to 921 (SVSAQAMQSQIG) has biased composition (polar residues).

Belongs to the importin beta family. In terms of assembly, forms a heterodimer with KPNB1. Interacts with SRP19. Interacts with RPL23A. Binds directly to nuclear pore complexes. Interacts with LRPPRC; the interaction occurs when LRPPRC is in its RNA-free form and promotes import of LRPPRC to the nucleus to allow for EIF4E-mediated export of mRNAS from the nucleus to the cytoplasm.

Its subcellular location is the cytoplasm. It is found in the nucleus. Functionally, involved in nuclear protein import, either by acting as autonomous nuclear transport receptor or as an adapter-like protein in association with the importin-beta subunit KPNB1. Acting autonomously, may serve as receptor for nuclear localization signals (NLS) and promote translocation of import substrates through the nuclear pore complex (NPC) by an energy requiring, Ran-dependent mechanism. At the nucleoplasmic side of the NPC, Ran binds to importin, the importin/substrate complex dissociates and importin is re-exported from the nucleus to the cytoplasm where GTP hydrolysis releases Ran. The directionality of nuclear import is thought to be conferred by an asymmetric distribution of the GTP- and GDP-bound forms of Ran between the cytoplasm and nucleus. In vitro mediates the nuclear import of the signal recognition particle protein SRP19. May also be involved in cytoplasm-to-nucleus shuttling of a broad spectrum of other cargos, including Argonaute-microRNAs complexes, the JUN protein, RELA/NF-kappa-B p65 subunit, the translation initiation factor EIF4E and a set of receptor-activated mothers against decapentaplegic homolog (SMAD) transcription factors that play a critical role downstream of the large family of transforming growth factor beta and bone morphogenetic protein (BMP) cytokines. This chain is Importin-8, found in Mus musculus (Mouse).